Here is a 569-residue protein sequence, read N- to C-terminus: Oxygen-dependent choline dehydrogenase (569 aa).

Residue 9 to 38 (DYVIIGGGSAGSVLGNRLSEDKDKEVLVLE) participates in FAD binding. His-475 (proton acceptor) is an active-site residue.

The protein belongs to the GMC oxidoreductase family. FAD serves as cofactor.

It carries out the reaction choline + A = betaine aldehyde + AH2. The enzyme catalyses betaine aldehyde + NAD(+) + H2O = glycine betaine + NADH + 2 H(+). It functions in the pathway amine and polyamine biosynthesis; betaine biosynthesis via choline pathway; betaine aldehyde from choline (cytochrome c reductase route): step 1/1. In terms of biological role, involved in the biosynthesis of the osmoprotectant glycine betaine. Catalyzes the oxidation of choline to betaine aldehyde and betaine aldehyde to glycine betaine at the same rate. This is Oxygen-dependent choline dehydrogenase from Staphylococcus aureus (strain COL).